The chain runs to 240 residues: UDP-2,3-diacylglucosamine hydrolase (240 aa).

Positions 8, 10, 41, 79, and 114 each coordinate Mn(2+). 79–80 contributes to the substrate binding site; it reads NR. Substrate-binding residues include aspartate 122, serine 160, asparagine 164, lysine 167, and histidine 195. Mn(2+) is bound by residues histidine 195 and histidine 197.

This sequence belongs to the LpxH family. Mn(2+) serves as cofactor.

The protein resides in the cell inner membrane. The enzyme catalyses UDP-2-N,3-O-bis[(3R)-3-hydroxytetradecanoyl]-alpha-D-glucosamine + H2O = 2-N,3-O-bis[(3R)-3-hydroxytetradecanoyl]-alpha-D-glucosaminyl 1-phosphate + UMP + 2 H(+). The protein operates within glycolipid biosynthesis; lipid IV(A) biosynthesis; lipid IV(A) from (3R)-3-hydroxytetradecanoyl-[acyl-carrier-protein] and UDP-N-acetyl-alpha-D-glucosamine: step 4/6. Its function is as follows. Hydrolyzes the pyrophosphate bond of UDP-2,3-diacylglucosamine to yield 2,3-diacylglucosamine 1-phosphate (lipid X) and UMP by catalyzing the attack of water at the alpha-P atom. Involved in the biosynthesis of lipid A, a phosphorylated glycolipid that anchors the lipopolysaccharide to the outer membrane of the cell. The polypeptide is UDP-2,3-diacylglucosamine hydrolase (Salmonella paratyphi A (strain ATCC 9150 / SARB42)).